A 367-amino-acid chain; its full sequence is NADH-quinone oxidoreductase subunit D (367 aa).

The protein belongs to the complex I 49 kDa subunit family. In terms of assembly, NDH-1 is composed of 14 different subunits. Subunits NuoB, C, D, E, F, and G constitute the peripheral sector of the complex.

Its subcellular location is the cell membrane. The enzyme catalyses a quinone + NADH + 5 H(+)(in) = a quinol + NAD(+) + 4 H(+)(out). In terms of biological role, NDH-1 shuttles electrons from NADH, via FMN and iron-sulfur (Fe-S) centers, to quinones in the respiratory chain. The immediate electron acceptor for the enzyme in this species is believed to be ubiquinone. Couples the redox reaction to proton translocation (for every two electrons transferred, four hydrogen ions are translocated across the cytoplasmic membrane), and thus conserves the redox energy in a proton gradient. The chain is NADH-quinone oxidoreductase subunit D from Dehalococcoides mccartyi (strain ATCC BAA-2266 / KCTC 15142 / 195) (Dehalococcoides ethenogenes (strain 195)).